The following is a 1301-amino-acid chain: DNA-directed RNA polymerase subunit beta (1301 aa).

The protein belongs to the RNA polymerase beta chain family. As to quaternary structure, the RNAP catalytic core consists of 2 alpha, 1 beta, 1 beta' and 1 omega subunit. When a sigma factor is associated with the core the holoenzyme is formed, which can initiate transcription.

It catalyses the reaction RNA(n) + a ribonucleoside 5'-triphosphate = RNA(n+1) + diphosphate. Functionally, DNA-dependent RNA polymerase catalyzes the transcription of DNA into RNA using the four ribonucleoside triphosphates as substrates. This is DNA-directed RNA polymerase subunit beta from Chlorobium luteolum (strain DSM 273 / BCRC 81028 / 2530) (Pelodictyon luteolum).